Reading from the N-terminus, the 126-residue chain is Flagellar protein FliT (126 aa).

Residues 1 to 50 form a required for homodimerization region; sequence MASPHRLLKDYQQLLSLSQKILHLAVNGQWDTLVEQEIVYVQSVEGLVNT. The interval 60 to 98 is fliD binding; it reads MRLHLRQILQEVMDNEAKVKQLLQKRMDELSSLMGQSLK.

It belongs to the FliT family. Homodimer. Interacts with FliD and FlhC.

It is found in the cytoplasm. The protein resides in the cytosol. Dual-function protein that regulates the transcription of class 2 flagellar operons and that also acts as an export chaperone for the filament-capping protein FliD. As a transcriptional regulator, acts as an anti-FlhDC factor; it directly binds FlhC, thus inhibiting the binding of the FlhC/FlhD complex to class 2 promoters, resulting in decreased expression of class 2 flagellar operons. As a chaperone, effects FliD transition to the membrane by preventing its premature polymerization, and by directing it to the export apparatus. The chain is Flagellar protein FliT from Pectobacterium carotovorum subsp. carotovorum (strain PC1).